Reading from the N-terminus, the 453-residue chain is UDP-N-acetylmuramoylalanine--D-glutamate ligase (453 aa).

120–126 (GSNGKST) is an ATP binding site.

The protein belongs to the MurCDEF family.

The protein resides in the cytoplasm. It carries out the reaction UDP-N-acetyl-alpha-D-muramoyl-L-alanine + D-glutamate + ATP = UDP-N-acetyl-alpha-D-muramoyl-L-alanyl-D-glutamate + ADP + phosphate + H(+). It participates in cell wall biogenesis; peptidoglycan biosynthesis. In terms of biological role, cell wall formation. Catalyzes the addition of glutamate to the nucleotide precursor UDP-N-acetylmuramoyl-L-alanine (UMA). This is UDP-N-acetylmuramoylalanine--D-glutamate ligase from Teredinibacter turnerae (strain ATCC 39867 / T7901).